Consider the following 246-residue polypeptide: MLLIPAIDLKDGECVRLRQGLMDDATVFSGDIVAMAERWVNQGARRLHMVDLNGAFEGKPVNGDAVYQVREAFPDLPIQIGGGIRDLETIEAYLKAGVSYCIIGTKAVHNPEFVAEACKAFPGHIMVGLDAKEGMVAINGWAEVTDHNVIDLGKQFENDGVEAIIYTDIGRDGMMQGVNIQATQALAKALNIPIIASGGITNLDDIRALATIEKDGVSGAITGRAIYEGSLNFKEGQALSDELSKA.

Asp8 (proton acceptor) is an active-site residue. Asp130 functions as the Proton donor in the catalytic mechanism.

This sequence belongs to the HisA/HisF family.

The protein localises to the cytoplasm. The enzyme catalyses 1-(5-phospho-beta-D-ribosyl)-5-[(5-phospho-beta-D-ribosylamino)methylideneamino]imidazole-4-carboxamide = 5-[(5-phospho-1-deoxy-D-ribulos-1-ylimino)methylamino]-1-(5-phospho-beta-D-ribosyl)imidazole-4-carboxamide. It participates in amino-acid biosynthesis; L-histidine biosynthesis; L-histidine from 5-phospho-alpha-D-ribose 1-diphosphate: step 4/9. The sequence is that of 1-(5-phosphoribosyl)-5-[(5-phosphoribosylamino)methylideneamino] imidazole-4-carboxamide isomerase from Hydrogenovibrio crunogenus (strain DSM 25203 / XCL-2) (Thiomicrospira crunogena).